Reading from the N-terminus, the 246-residue chain is Mast cell protease 9 (246 aa).

The signal sequence occupies residues 1-18 (MQALLFLMALLLPSRAGA). Positions 19–20 (EE) are cleaved as a propeptide — activation peptide. Positions 21–244 (IIGGVESEPH…HVPWINRVIK (224 aa)) constitute a Peptidase S1 domain. A disulfide bridge links cysteine 50 with cysteine 66. Residues histidine 65 and aspartate 109 each act as charge relay system in the active site. Intrachain disulfides connect cysteine 143–cysteine 208 and cysteine 174–cysteine 187. The active-site Charge relay system is serine 202.

It belongs to the peptidase S1 family. Granzyme subfamily. In terms of tissue distribution, selectively expressed in uterine mast cells.

The protein is Mast cell protease 9 (Mcpt9) of Mus musculus (Mouse).